The chain runs to 384 residues: Probable RNA 3'-terminal phosphate cyclase-like protein (384 aa).

It belongs to the RNA 3'-terminal cyclase family. Type 2 subfamily. As to quaternary structure, part of the small subunit (SSU) processome, composed of more than 70 proteins and the RNA chaperone small nucleolar RNA (snoRNA) U3.

It is found in the nucleus. The protein resides in the nucleolus. In terms of biological role, part of the small subunit (SSU) processome, first precursor of the small eukaryotic ribosomal subunit. During the assembly of the SSU processome in the nucleolus, many ribosome biogenesis factors, an RNA chaperone and ribosomal proteins associate with the nascent pre-rRNA and work in concert to generate RNA folding, modifications, rearrangements and cleavage as well as targeted degradation of pre-ribosomal RNA by the RNA exosome. Does not have cyclase activity. The protein is Probable RNA 3'-terminal phosphate cyclase-like protein (Rtc1) of Drosophila melanogaster (Fruit fly).